Consider the following 200-residue polypeptide: Large ribosomal subunit protein uL4 (200 aa).

Residues 38–67 (GRQGSKAQKTRSEVSGGGKKPWRQKGTGRA) are disordered.

This sequence belongs to the universal ribosomal protein uL4 family. As to quaternary structure, part of the 50S ribosomal subunit.

In terms of biological role, one of the primary rRNA binding proteins, this protein initially binds near the 5'-end of the 23S rRNA. It is important during the early stages of 50S assembly. It makes multiple contacts with different domains of the 23S rRNA in the assembled 50S subunit and ribosome. Its function is as follows. Forms part of the polypeptide exit tunnel. The protein is Large ribosomal subunit protein uL4 of Pseudomonas paraeruginosa (strain DSM 24068 / PA7) (Pseudomonas aeruginosa (strain PA7)).